We begin with the raw amino-acid sequence, 288 residues long: Hydroxyethylthiazole kinase (288 aa).

Met55 is a substrate binding site. Asn131 and Ser177 together coordinate ATP. Gly204 contributes to the substrate binding site.

The protein belongs to the Thz kinase family. It depends on Mg(2+) as a cofactor.

It carries out the reaction 5-(2-hydroxyethyl)-4-methylthiazole + ATP = 4-methyl-5-(2-phosphooxyethyl)-thiazole + ADP + H(+). It functions in the pathway cofactor biosynthesis; thiamine diphosphate biosynthesis; 4-methyl-5-(2-phosphoethyl)-thiazole from 5-(2-hydroxyethyl)-4-methylthiazole: step 1/1. Catalyzes the phosphorylation of the hydroxyl group of 4-methyl-5-beta-hydroxyethylthiazole (THZ). The chain is Hydroxyethylthiazole kinase from Haloquadratum walsbyi (strain DSM 16790 / HBSQ001).